Consider the following 84-residue polypeptide: Small ribosomal subunit protein uS17c (84 aa).

The protein belongs to the universal ribosomal protein uS17 family. Part of the 30S ribosomal subunit.

Its subcellular location is the plastid. The protein resides in the chloroplast. Functionally, one of the primary rRNA binding proteins, it binds specifically to the 5'-end of 16S ribosomal RNA. This chain is Small ribosomal subunit protein uS17c (rps17), found in Phaeodactylum tricornutum (strain CCAP 1055/1).